The primary structure comprises 105 residues: uncharacterized protein (105 aa).

Over 1 to 48 the chain is Extracellular; sequence MAPKAFFVCLPWVLPRHALIVRQAGNPYHFLAYTNPRAPGKLQDSHCP. Residues 49–69 form a helical membrane-spanning segment; sequence VFFMGIIIITIITVTLAIIII. A topological domain (cytoplasmic) is located at residue Asn-70. A helical transmembrane segment spans residues 71–91; it reads IIFLTLFDDGMCFYCSLLTFS. Over 92–105 the chain is Extracellular; the sequence is FVSFNFDHFDHFDL.

It localises to the membrane. This is an uncharacterized protein from Saccharomyces cerevisiae (strain ATCC 204508 / S288c) (Baker's yeast).